Here is a 230-residue protein sequence, read N- to C-terminus: uncharacterized protein (230 aa).

The first 18 residues, 1–18 (MRQYTSKSILFMTAIALS), serve as a signal peptide directing secretion.

This is an uncharacterized protein from Pasteurella multocida (strain Pm70).